The chain runs to 290 residues: L-fucono-1,5-lactonase (290 aa).

Belongs to the metallo-dependent hydrolases superfamily.

The catalysed reaction is L-fucono-1,5-lactone + H2O = L-fuconate + H(+). It catalyses the reaction L-fucono-1,4-lactone + H2O = L-fuconate + H(+). It carries out the reaction D-arabinono-1,4-lactone + H2O = D-arabinonate + H(+). The enzyme catalyses L-xylono-1,4-lactone + H2O = L-xylonate + H(+). The catalysed reaction is L-galactono-1,4-lactone + H2O = L-galactonate + H(+). Its function is as follows. Catalyzes the hydrolysis of L-fucono-1,5-lactone to L-fuconate. Can also hydrolyze L-fucono-1,4-lactone, L-galactono-1,4-lactone D-arabinono-1,4-lactone and L-xylono-1,4-lactone. This Burkholderia ambifaria (strain ATCC BAA-244 / DSM 16087 / CCUG 44356 / LMG 19182 / AMMD) (Burkholderia cepacia (strain AMMD)) protein is L-fucono-1,5-lactonase.